A 295-amino-acid polypeptide reads, in one-letter code: Cytidine deaminase (295 aa).

2 CMP/dCMP-type deaminase domains span residues 48–168 (ADDE…FGPA) and 187–295 (EETT…YLAI). 89–91 (NLE) contacts substrate. His102 lines the Zn(2+) pocket. The Proton donor role is filled by Glu104. Zn(2+)-binding residues include Cys129 and Cys132.

This sequence belongs to the cytidine and deoxycytidylate deaminase family. As to quaternary structure, homodimer. Zn(2+) is required as a cofactor.

The enzyme catalyses cytidine + H2O + H(+) = uridine + NH4(+). The catalysed reaction is 2'-deoxycytidine + H2O + H(+) = 2'-deoxyuridine + NH4(+). This enzyme scavenges exogenous and endogenous cytidine and 2'-deoxycytidine for UMP synthesis. This Vibrio atlanticus (strain LGP32) (Vibrio splendidus (strain Mel32)) protein is Cytidine deaminase.